A 333-amino-acid chain; its full sequence is 4-hydroxy-3-methylbut-2-enyl diphosphate reductase (333 aa).

Position 34 (C34) interacts with [4Fe-4S] cluster. (2E)-4-hydroxy-3-methylbut-2-enyl diphosphate-binding residues include H63 and H96. H63 and H96 together coordinate dimethylallyl diphosphate. Positions 63 and 96 each coordinate isopentenyl diphosphate. C118 serves as a coordination point for [4Fe-4S] cluster. Residue H146 coordinates (2E)-4-hydroxy-3-methylbut-2-enyl diphosphate. H146 is a dimethylallyl diphosphate binding site. H146 serves as a coordination point for isopentenyl diphosphate. The Proton donor role is filled by E148. T186 lines the (2E)-4-hydroxy-3-methylbut-2-enyl diphosphate pocket. Residue C216 participates in [4Fe-4S] cluster binding. (2E)-4-hydroxy-3-methylbut-2-enyl diphosphate contacts are provided by S244, S245, N246, and S289. Residues S244, S245, N246, and S289 each coordinate dimethylallyl diphosphate. 4 residues coordinate isopentenyl diphosphate: S244, S245, N246, and S289.

It belongs to the IspH family. It depends on [4Fe-4S] cluster as a cofactor.

It carries out the reaction isopentenyl diphosphate + 2 oxidized [2Fe-2S]-[ferredoxin] + H2O = (2E)-4-hydroxy-3-methylbut-2-enyl diphosphate + 2 reduced [2Fe-2S]-[ferredoxin] + 2 H(+). It catalyses the reaction dimethylallyl diphosphate + 2 oxidized [2Fe-2S]-[ferredoxin] + H2O = (2E)-4-hydroxy-3-methylbut-2-enyl diphosphate + 2 reduced [2Fe-2S]-[ferredoxin] + 2 H(+). Its pathway is isoprenoid biosynthesis; dimethylallyl diphosphate biosynthesis; dimethylallyl diphosphate from (2E)-4-hydroxy-3-methylbutenyl diphosphate: step 1/1. It participates in isoprenoid biosynthesis; isopentenyl diphosphate biosynthesis via DXP pathway; isopentenyl diphosphate from 1-deoxy-D-xylulose 5-phosphate: step 6/6. Its function is as follows. Catalyzes the conversion of 1-hydroxy-2-methyl-2-(E)-butenyl 4-diphosphate (HMBPP) into a mixture of isopentenyl diphosphate (IPP) and dimethylallyl diphosphate (DMAPP). Acts in the terminal step of the DOXP/MEP pathway for isoprenoid precursor biosynthesis. The protein is 4-hydroxy-3-methylbut-2-enyl diphosphate reductase of Mycobacterium sp. (strain JLS).